The primary structure comprises 271 residues: uncharacterized protein (271 aa).

3 Solcar repeats span residues 3–74 (VQTL…AKRR), 81–163 (EGAI…SKKY), and 171–268 (DISV…FKSK). 6 helical membrane passes run 5-26 (TLMAASAGAVASRLLCHPIDTI), 49-69 (GLPISLTLITPATCLYLSTYV), 84-104 (ILYSICGMTAEVVSSFVWTPL), 138-158 (GYWMGVAIYLPTTVSWWVCYE), 170-190 (WDISVIAPICSALGTVVATTI), and 240-261 (FTRGLFTRMCYIMPSGMISMSV).

Belongs to the mitochondrial carrier (TC 2.A.29) family.

It localises to the mitochondrion inner membrane. This is an uncharacterized protein from Schizosaccharomyces pombe (strain 972 / ATCC 24843) (Fission yeast).